A 391-amino-acid chain; its full sequence is Succinate--CoA ligase [ADP-forming] subunit beta (391 aa).

The 229-residue stretch at R9–R237 folds into the ATP-grasp domain. Residues K46, G53–G55, A95, and E100 each bind ATP. Positions 192 and 206 each coordinate Mg(2+). Residues N257 and G320–T322 contribute to the substrate site.

Belongs to the succinate/malate CoA ligase beta subunit family. In terms of assembly, heterotetramer of two alpha and two beta subunits. Mg(2+) serves as cofactor.

It carries out the reaction succinate + ATP + CoA = succinyl-CoA + ADP + phosphate. The catalysed reaction is GTP + succinate + CoA = succinyl-CoA + GDP + phosphate. It participates in carbohydrate metabolism; tricarboxylic acid cycle; succinate from succinyl-CoA (ligase route): step 1/1. Functionally, succinyl-CoA synthetase functions in the citric acid cycle (TCA), coupling the hydrolysis of succinyl-CoA to the synthesis of either ATP or GTP and thus represents the only step of substrate-level phosphorylation in the TCA. The beta subunit provides nucleotide specificity of the enzyme and binds the substrate succinate, while the binding sites for coenzyme A and phosphate are found in the alpha subunit. In Cutibacterium acnes (strain DSM 16379 / KPA171202) (Propionibacterium acnes), this protein is Succinate--CoA ligase [ADP-forming] subunit beta.